Reading from the N-terminus, the 533-residue chain is Glucomannan 4-beta-mannosyltransferase 9 (533 aa).

A helical transmembrane segment spans residues 37–57; that stretch reads IVPALRLGVYICLTMSVMLFV. Aspartate 136 is an active-site residue. Aspartate 195 and aspartate 197 together coordinate substrate. Residue aspartate 289 is part of the active site. Transmembrane regions (helical) follow at residues 368–388, 404–426, 483–503, and 510–530; these read LVAH…TVLV, VITL…WILF, VLEL…AFFG, and YLFA…GTIV.

The protein belongs to the glycosyltransferase 2 family. Plant cellulose synthase-like A subfamily. In terms of tissue distribution, expressed in cotyledons at the base of the hypocotyls, in root elongation zone, lateral root primordia, vascular system of young leaves, abscission zone of the pedicle,.

Its subcellular location is the golgi apparatus membrane. The enzyme catalyses GDP-mannose + (glucomannan)n = GDP + (glucomannan)n+1.. Possesses glucomannan synthase and mannan synthase activities in vitro. Mannan synthase consists of a 4-beta-mannosyltransferase activity on mannan using GDP-mannose. The beta-1,4-mannan product is the backbone for galactomannan synthesis by galactomannan galactosyltransferase. Galactomannan is a noncellulosic polysaccharides of plant cell wall. Required for lateral root development. The polypeptide is Glucomannan 4-beta-mannosyltransferase 9 (Arabidopsis thaliana (Mouse-ear cress)).